The following is a 217-amino-acid chain: Gas vesicle protein F2 (217 aa).

It belongs to the gas vesicle GvpF/GvpL family. In terms of assembly, binds GvpA.

The protein resides in the gas vesicle. Its subcellular location is the cytoplasm. Its function is as follows. A minor component of the gas vesicle, may be involved in preventing GvpA aggregation during gas vesicle nucleation. Gas vesicles are hollow, gas filled proteinaceous nanostructures found in several microbial planktonic microorganisms. They allow positioning of halobacteria at the optimal depth for growth in the poorly aerated, shallow brine pools of their habitat. Expression of 2 c-vac DNA fragments containing 2 divergently transcribed regions (gvpE-gvpF-gvpG-gvpH-gvpI-gvpJ-gvpK-gvpL-gvpM and gvpA-gvpC-gvpN-gvpO) allows H.volcanii to produce gas vesicles. Note that gvpD is not necessary for gas vesicle formation. The polypeptide is Gas vesicle protein F2 (Halobacterium salinarum (strain ATCC 700922 / JCM 11081 / NRC-1) (Halobacterium halobium)).